Here is a 68-residue protein sequence, read N- to C-terminus: Non-specific lipid-transfer protein 2 (68 aa).

It belongs to the plant LTP family.

In terms of biological role, plant non-specific lipid-transfer proteins transfer phospholipids as well as galactolipids across membranes. May play a role in wax or cutin deposition in the cell walls of expanding epidermal cells and certain secretory tissues. In Prunus armeniaca (Apricot), this protein is Non-specific lipid-transfer protein 2.